Reading from the N-terminus, the 235-residue chain is MSNPNYKIPIKEWIVSERPRELLLSKGPEHLPDAKLLAIILRTGNKEETAEDLARRLLNTFGGFTGLYRASVEELLQIKGMGKAKAAQVKAALEIGKRFLQNETVEEARITTPEDAIEYAARYFSSMLMNEGKEHFWILLLDRKNRPIKHVEISVGSSIQTTVDPKEILKQVSLTSAQALILIHNHPSGDPSPSREDVAVTKQLKQACELVGAQLLDHIIVGKNQHVSLAREKLI.

In terms of domain architecture, MPN spans 109 to 235 (RITTPEDAIE…HVSLAREKLI (127 aa)). 3 residues coordinate Zn(2+): H184, H186, and D197. The JAMM motif motif lies at 184–197 (HNHPSGDPSPSRED).

Belongs to the UPF0758 family.

The protein is UPF0758 protein COPRO5265_1522 of Coprothermobacter proteolyticus (strain ATCC 35245 / DSM 5265 / OCM 4 / BT).